The sequence spans 117 residues: G antigen 4 (117 aa).

The disordered stretch occupies residues 1–117 (MSWRGRSTYY…PEEGEKQSQC (117 aa)). Acidic residues-rich tracts occupy residues 32–45 (FSDE…EEGE) and 87–96 (ECEDGPDGQE). The span at 103–117 (EEVKTPEEGEKQSQC) shows a compositional bias: basic and acidic residues.

It belongs to the GAGE family. In terms of tissue distribution, expressed in a variety of tumor tissues but not in normal tissues, except testis.

Its function is as follows. Antigen, recognized on melanoma by autologous cytolytic T-lymphocytes. This Homo sapiens (Human) protein is G antigen 4.